Here is a 612-residue protein sequence, read N- to C-terminus: Dihydroxy-acid dehydratase (612 aa).

D81 is a binding site for Mg(2+). C122 serves as a coordination point for [2Fe-2S] cluster. D123 and K124 together coordinate Mg(2+). K124 carries the N6-carboxylysine modification. Residue C193 participates in [2Fe-2S] cluster binding. Residue E489 coordinates Mg(2+). S515 acts as the Proton acceptor in catalysis.

It belongs to the IlvD/Edd family. Homodimer. It depends on [2Fe-2S] cluster as a cofactor. Mg(2+) serves as cofactor.

The enzyme catalyses (2R)-2,3-dihydroxy-3-methylbutanoate = 3-methyl-2-oxobutanoate + H2O. The catalysed reaction is (2R,3R)-2,3-dihydroxy-3-methylpentanoate = (S)-3-methyl-2-oxopentanoate + H2O. It functions in the pathway amino-acid biosynthesis; L-isoleucine biosynthesis; L-isoleucine from 2-oxobutanoate: step 3/4. The protein operates within amino-acid biosynthesis; L-valine biosynthesis; L-valine from pyruvate: step 3/4. Functions in the biosynthesis of branched-chain amino acids. Catalyzes the dehydration of (2R,3R)-2,3-dihydroxy-3-methylpentanoate (2,3-dihydroxy-3-methylvalerate) into 2-oxo-3-methylpentanoate (2-oxo-3-methylvalerate) and of (2R)-2,3-dihydroxy-3-methylbutanoate (2,3-dihydroxyisovalerate) into 2-oxo-3-methylbutanoate (2-oxoisovalerate), the penultimate precursor to L-isoleucine and L-valine, respectively. This chain is Dihydroxy-acid dehydratase, found in Stenotrophomonas maltophilia (strain R551-3).